Reading from the N-terminus, the 306-residue chain is Probable rRNA-processing protein EBP2 (306 aa).

Methionine 1 bears the N-acetylmethionine mark. Disordered stretches follow at residues 1–20, 75–103, and 150–169; these read MDTPPLSESDSESDACLASD, GPVPEVSETQPTPQNQDQKKGVNPEDDFQ, and IRQKLQTKQAAMEKSEKAKQ. At threonine 3 the chain carries Phosphothreonine. Phosphoserine is present on residues serine 7, serine 9, serine 11, and serine 13. The segment covering 81–90 has biased composition (polar residues); it reads SETQPTPQNQ. Basic and acidic residues predominate over residues 91 to 103; it reads DQKKGVNPEDDFQ. Lysine 93 is covalently cross-linked (Glycyl lysine isopeptide (Lys-Gly) (interchain with G-Cter in SUMO2)). Positions 135–171 form a coiled coil; sequence DYFAEMAKSDQQMQKIRQKLQTKQAAMEKSEKAKQLR. Residues lysine 179 and lysine 218 each participate in a glycyl lysine isopeptide (Lys-Gly) (interchain with G-Cter in SUMO2) cross-link. Residues 213–224 show a composition bias toward basic and acidic residues; the sequence is LEGDQKPVERSA. Positions 213–306 are disordered; sequence LEGDQKPVER…ARQKLKSKAR (94 aa). Phosphoserine is present on residues serine 264 and serine 270. The segment covering 274–306 has biased composition (basic residues); sequence KVAHGKGSRRPGKKGANKRPGKRARQKLKSKAR.

The protein belongs to the EBP2 family. Interacts with WDR46.

The protein localises to the nucleus. It localises to the nucleolus. Required for the processing of the 27S pre-rRNA. This Mus musculus (Mouse) protein is Probable rRNA-processing protein EBP2 (Ebna1bp2).